Here is a 341-residue protein sequence, read N- to C-terminus: S-adenosylmethionine:tRNA ribosyltransferase-isomerase (341 aa).

It belongs to the QueA family. Monomer.

The protein localises to the cytoplasm. The catalysed reaction is 7-aminomethyl-7-carbaguanosine(34) in tRNA + S-adenosyl-L-methionine = epoxyqueuosine(34) in tRNA + adenine + L-methionine + 2 H(+). It functions in the pathway tRNA modification; tRNA-queuosine biosynthesis. In terms of biological role, transfers and isomerizes the ribose moiety from AdoMet to the 7-aminomethyl group of 7-deazaguanine (preQ1-tRNA) to give epoxyqueuosine (oQ-tRNA). This chain is S-adenosylmethionine:tRNA ribosyltransferase-isomerase, found in Caldanaerobacter subterraneus subsp. tengcongensis (strain DSM 15242 / JCM 11007 / NBRC 100824 / MB4) (Thermoanaerobacter tengcongensis).